The chain runs to 440 residues: DNA polymerase delta small subunit (440 aa).

Belongs to the DNA polymerase delta/II small subunit family. As to quaternary structure, heterodimer with subunits of 125 kDa and 50 kDa.

It localises to the nucleus. The catalysed reaction is DNA(n) + a 2'-deoxyribonucleoside 5'-triphosphate = DNA(n+1) + diphosphate. In terms of biological role, the function of the small subunit is not yet clear. The chain is DNA polymerase delta small subunit (POLD2) from Arabidopsis thaliana (Mouse-ear cress).